A 255-amino-acid chain; its full sequence is tRNA uridine(34) hydroxylase (255 aa).

A Rhodanese domain is found at 125-219 (ATPDTILLDV…YLEQIPESES (95 aa)). Catalysis depends on cysteine 179, which acts as the Cysteine persulfide intermediate.

Belongs to the TrhO family.

It catalyses the reaction uridine(34) in tRNA + AH2 + O2 = 5-hydroxyuridine(34) in tRNA + A + H2O. In terms of biological role, catalyzes oxygen-dependent 5-hydroxyuridine (ho5U) modification at position 34 in tRNAs. This Nitrobacter winogradskyi (strain ATCC 25391 / DSM 10237 / CIP 104748 / NCIMB 11846 / Nb-255) protein is tRNA uridine(34) hydroxylase.